Here is a 1153-residue protein sequence, read N- to C-terminus: Error-prone DNA polymerase (1153 aa).

The segment at 1107–1153 is disordered; sequence DELIAPSASTEREAPLNDDRRDHPDLPAQQIRHPRNVRILPPSRDFH. Positions 1116-1131 are enriched in basic and acidic residues; sequence TEREAPLNDDRRDHPD.

This sequence belongs to the DNA polymerase type-C family. DnaE2 subfamily.

It localises to the cytoplasm. It carries out the reaction DNA(n) + a 2'-deoxyribonucleoside 5'-triphosphate = DNA(n+1) + diphosphate. DNA polymerase involved in damage-induced mutagenesis and translesion synthesis (TLS). It is not the major replicative DNA polymerase. The chain is Error-prone DNA polymerase from Rhodopseudomonas palustris (strain BisA53).